Here is a 292-residue protein sequence, read N- to C-terminus: Malonyl-[acyl-carrier protein] O-methyltransferase (292 aa).

It belongs to the methyltransferase superfamily.

It catalyses the reaction malonyl-[ACP] + S-adenosyl-L-methionine = malonyl-[ACP] methyl ester + S-adenosyl-L-homocysteine. It functions in the pathway cofactor biosynthesis; biotin biosynthesis. Converts the free carboxyl group of a malonyl-thioester to its methyl ester by transfer of a methyl group from S-adenosyl-L-methionine (SAM). It allows to synthesize pimeloyl-ACP via the fatty acid synthetic pathway. The protein is Malonyl-[acyl-carrier protein] O-methyltransferase of Alcanivorax borkumensis (strain ATCC 700651 / DSM 11573 / NCIMB 13689 / SK2).